Reading from the N-terminus, the 93-residue chain is Co-chaperonin GroES (93 aa).

Belongs to the GroES chaperonin family. In terms of assembly, heptamer of 7 subunits arranged in a ring. Interacts with the chaperonin GroEL.

It localises to the cytoplasm. Functionally, together with the chaperonin GroEL, plays an essential role in assisting protein folding. The GroEL-GroES system forms a nano-cage that allows encapsulation of the non-native substrate proteins and provides a physical environment optimized to promote and accelerate protein folding. GroES binds to the apical surface of the GroEL ring, thereby capping the opening of the GroEL channel. This chain is Co-chaperonin GroES, found in Lacticaseibacillus paracasei (strain ATCC 334 / BCRC 17002 / CCUG 31169 / CIP 107868 / KCTC 3260 / NRRL B-441) (Lactobacillus paracasei).